Here is an 848-residue protein sequence, read N- to C-terminus: MNGNFAAVGSEPTDAQFEHGIQVIDEDKQYNGLVNDYLRRTHVAEAGFNYHLISVFGSQSTGKSTLLNNLFGTEFSVMSESERRQTTKGIWMSKNKREGKMAENILVMDVEGTDGRERGEDQDFERKSALFALATSEVLIVNIWEHQVGLYQGANMGLLKTVFEVNLQLFLKDKQSSPRSLLFFVIRDHIGNTPLSNLRNTLVQDLTKIWSSISKPPALENAKIEDYFDFAFAALPHKILQPEKFVTEVENLGTRFVAGHRSTQDQEFVGGVFLPEYHRRIPADGFSIYAEGIWDQIVNNKDLDLPTQQELLAQFRCDEISRDVLNAFDEAITPLEDKQAEASRLGKPFVLPDLGDTARSARSKAVEAFKVQASRYHKGVYTRKQAELEGKMDSRLKALYQGQLAAAHKAGVAAFSDAVTGAVKAGQKSGGSYEFAEIVDKQKRKTLDIFAKEAQGLEIEGLAWTNFKPQFLLFEKELDEVSARLRKDEMRRLATRVERWVKSRLGDSIGLEFNKLGSGRGGSGAPETGEKPATEKDLWDRIWTVFVAVVKEAQERFAERAKSFEASSEEVEIGLWRLRRKSWVALRERIDEEVMEGNILLKLRENFEDKFRYDEAGVPRIWRPTDDIEGIYTRARESTLTLIPLLSRFRLAETYASPDLPGWIGNQPPGVEPDDEEDLTPIGGIDEEEGKSLEEEMTVLSESKRQDLVVRFKKTADGVYVEAKRGALGGMTQVPLYFWIALFAFGWNEIWMVIRNPFLFILLLLSAGGTYVAYNLSLLGPMMQMTNAAANQASEIGKQKLREFLENNETARQALAMPASSKSSGGEQVRMDTLDSKGKKKDYDDDGI.

At 1-733 the chain is on the cytoplasmic side; it reads MNGNFAAVGS…KRGALGGMTQ (733 aa). Residues 47-277 form the GB1/RHD3-type G domain; sequence GFNYHLISVF…FVGGVFLPEY (231 aa). 57–64 is a binding site for GTP; sequence GSQSTGKS. Residues 734-754 form a helical membrane-spanning segment; sequence VPLYFWIALFAFGWNEIWMVI. Over 755 to 757 the chain is Lumenal; the sequence is RNP. A helical membrane pass occupies residues 758 to 778; that stretch reads FLFILLLLSAGGTYVAYNLSL. Topologically, residues 779–848 are cytoplasmic; it reads LGPMMQMTNA…KKKDYDDDGI (70 aa). Residues 815–848 form a disordered region; that stretch reads LAMPASSKSSGGEQVRMDTLDSKGKKKDYDDDGI. Residues 829 to 848 are compositionally biased toward basic and acidic residues; sequence VRMDTLDSKGKKKDYDDDGI.

The protein belongs to the TRAFAC class dynamin-like GTPase superfamily. GB1/RHD3 GTPase family. RHD3 subfamily.

The protein localises to the endoplasmic reticulum membrane. Its function is as follows. Cooperates with the reticulon proteins and tubule-shaping DP1 family proteins to generate and maintain the structure of the tubular endoplasmic reticulum network. Has GTPase activity, which is required for its function in ER organization. This chain is Protein SEY1, found in Pyricularia oryzae (strain 70-15 / ATCC MYA-4617 / FGSC 8958) (Rice blast fungus).